Here is a 61-residue protein sequence, read N- to C-terminus: Large ribosomal subunit protein bL28 (61 aa).

It belongs to the bacterial ribosomal protein bL28 family.

The protein is Large ribosomal subunit protein bL28 of Geobacillus kaustophilus (strain HTA426).